A 451-amino-acid polypeptide reads, in one-letter code: Phenylalanine--tRNA ligase, mitochondrial (451 aa).

Residues 157 to 160, Arg-179, 186 to 188, and 193 to 195 each bind substrate; these read SAHQ, QHY, and QLE. The residue at position 202 (Lys-202) is an N6-acetyllysine. Residues Glu-287 and Phe-312 each coordinate substrate. The FDX-ACB domain occupies 358–450; sequence SKYPAVINDI…AVQLLGVEGR (93 aa).

This sequence belongs to the class-II aminoacyl-tRNA synthetase family. In terms of assembly, monomer.

The protein resides in the mitochondrion matrix. It localises to the mitochondrion. It catalyses the reaction tRNA(Phe) + L-phenylalanine + ATP = L-phenylalanyl-tRNA(Phe) + AMP + diphosphate + H(+). Is responsible for the charging of tRNA(Phe) with phenylalanine in mitochondrial translation. To a lesser extent, also catalyzes direct attachment of m-Tyr (an oxidized version of Phe) to tRNA(Phe), thereby opening the way for delivery of the misacylated tRNA to the ribosome and incorporation of ROS-damaged amino acid into proteins. The polypeptide is Phenylalanine--tRNA ligase, mitochondrial (FARS2) (Homo sapiens (Human)).